A 150-amino-acid chain; its full sequence is Anthrone oxygenase gedH (150 aa).

A run of 4 helical transmembrane segments spans residues 1-21, 41-61, 73-93, and 128-148; these read MANPAVGAMMGLSLVAVPVFL, GHKLMPTIAVATCALHGWVAA, PVLAAVTTITMVPFTWVCMVS, and LFPLAGAIVACQTLLKELVGG.

Belongs to the anthrone oxygenase family.

It localises to the membrane. The catalysed reaction is emodin anthrone + O2 = emodin + H2O + H(+). It functions in the pathway secondary metabolite biosynthesis. Anthrone oxygenase; part of the gene cluster that mediates the biosynthesis of geodin, an intermediate in the biosynthesis of other natural products. The pathway begins with the synthesis of atrochrysone thioester by the polyketide synthase (PKS) gedC. The atrochrysone carboxyl ACP thioesterase gedB then breaks the thioester bond and releases the atrochrysone carboxylic acid from gedC. The atrochrysone carboxylic acid is then converted to atrochrysone which is further transformed into emodin anthrone. The next step is performed by the emodin anthrone oxygenase gedH that catalyzes the oxidation of emodinanthrone to emodin. Emodin O-methyltransferase encoded probably by gedA then catalyzes methylation of the 8-hydroxy group of emodin to form questin. Ring cleavage of questin by questin oxidase gedK leads to desmethylsulochrin via several intermediates including questin epoxide. Another methylation step probably catalyzed by methyltransferase gedG leads to the formation of sulochrin which is further converted to dihydrogeodin by the sulochrin halogenase gedL. Finally, the dihydrogeodin oxidase gedJ catalyzes the stereospecific phenol oxidative coupling reaction converting dihydrogeodin to geodin. The polypeptide is Anthrone oxygenase gedH (Aspergillus terreus (strain NIH 2624 / FGSC A1156)).